The sequence spans 234 residues: MKAVCVLSGGLDSAVCMAMAKSEGLELYSITFDYGQRAVKKEIIASKKLSELFGAVHKVVELPFVKDFSSSALTKKEEEVPTIKNSELDNLEKATETMEKVWVPARNMILFSISSGFAEFVDAKYIYTGLNVEEGATFPDNTEEFLNRFNSVLEYGTLNKVKMKSPLYKYSKKEIVKIGKKLEEKLNVEFLKYSYSCYHDNKTDFLHCGTCESCMRRKRAFKEAGVEDPTEYIL.

7–17 (LSGGLDSAVCM) provides a ligand contact to ATP. The Zn(2+) site is built by Cys-197, Cys-208, Cys-211, and Cys-214.

The protein belongs to the QueC family. Zn(2+) serves as cofactor.

It catalyses the reaction 7-carboxy-7-deazaguanine + NH4(+) + ATP = 7-cyano-7-deazaguanine + ADP + phosphate + H2O + H(+). Its pathway is purine metabolism; 7-cyano-7-deazaguanine biosynthesis. In terms of biological role, catalyzes the ATP-dependent conversion of 7-carboxy-7-deazaguanine (CDG) to 7-cyano-7-deazaguanine (preQ(0)). The chain is 7-cyano-7-deazaguanine synthase from Methanococcus aeolicus (strain ATCC BAA-1280 / DSM 17508 / OCM 812 / Nankai-3).